An 82-amino-acid chain; its full sequence is Cytochrome b559 subunit alpha (82 aa).

A helical membrane pass occupies residues 22–36 (VIHAITLPSIFLAGF). His24 is a binding site for heme.

This sequence belongs to the PsbE/PsbF family. In terms of assembly, heterodimer of an alpha subunit and a beta subunit. PSII is composed of 1 copy each of membrane proteins PsbA, PsbB, PsbC, PsbD, PsbE, PsbF, PsbH, PsbI, PsbJ, PsbK, PsbL, PsbM, PsbT, PsbX, PsbY, PsbZ, Psb30/Ycf12, peripheral proteins PsbO, CyanoQ (PsbQ), PsbU, PsbV and a large number of cofactors. It forms dimeric complexes. Requires heme b as cofactor.

The protein localises to the cellular thylakoid membrane. Its function is as follows. This b-type cytochrome is tightly associated with the reaction center of photosystem II (PSII). PSII is a light-driven water:plastoquinone oxidoreductase that uses light energy to abstract electrons from H(2)O, generating O(2) and a proton gradient subsequently used for ATP formation. It consists of a core antenna complex that captures photons, and an electron transfer chain that converts photonic excitation into a charge separation. The sequence is that of Cytochrome b559 subunit alpha from Synechococcus sp. (strain WH7803).